Reading from the N-terminus, the 505-residue chain is Glutamate--tRNA ligase (505 aa).

A 'HIGH' region motif is present at residues 12–22; that stretch reads PSPTGALHIGG. The short motif at 260–264 is the 'KMSKS' region element; sequence KLSKR. Lys-263 is a binding site for ATP.

It belongs to the class-I aminoacyl-tRNA synthetase family. Glutamate--tRNA ligase type 1 subfamily. As to quaternary structure, monomer.

It localises to the cytoplasm. The enzyme catalyses tRNA(Glu) + L-glutamate + ATP = L-glutamyl-tRNA(Glu) + AMP + diphosphate. Its function is as follows. Catalyzes the attachment of glutamate to tRNA(Glu) in a two-step reaction: glutamate is first activated by ATP to form Glu-AMP and then transferred to the acceptor end of tRNA(Glu). The protein is Glutamate--tRNA ligase of Bacteroides fragilis (strain ATCC 25285 / DSM 2151 / CCUG 4856 / JCM 11019 / LMG 10263 / NCTC 9343 / Onslow / VPI 2553 / EN-2).